Consider the following 163-residue polypeptide: Nucleotide-binding protein tll0793 (163 aa).

It belongs to the YajQ family.

In terms of biological role, nucleotide-binding protein. The sequence is that of Nucleotide-binding protein tll0793 from Thermosynechococcus vestitus (strain NIES-2133 / IAM M-273 / BP-1).